Reading from the N-terminus, the 102-residue chain is Large ribosomal subunit protein bL21 (102 aa).

Belongs to the bacterial ribosomal protein bL21 family. Part of the 50S ribosomal subunit. Contacts protein L20.

This protein binds to 23S rRNA in the presence of protein L20. This chain is Large ribosomal subunit protein bL21, found in Phytoplasma mali (strain AT).